The primary structure comprises 181 residues: Small ribosomal subunit protein uS4 (181 aa).

Residues 108–180 (RRLQTIVYRK…GERQRIMNQR (73 aa)) enclose the S4 RNA-binding domain.

This sequence belongs to the universal ribosomal protein uS4 family. Part of the 30S ribosomal subunit. Contacts protein S5. The interaction surface between S4 and S5 is involved in control of translational fidelity.

Its function is as follows. One of the primary rRNA binding proteins, it binds directly to 16S rRNA where it nucleates assembly of the body of the 30S subunit. In terms of biological role, with S5 and S12 plays an important role in translational accuracy. In Methanocorpusculum labreanum (strain ATCC 43576 / DSM 4855 / Z), this protein is Small ribosomal subunit protein uS4.